Here is a 191-residue protein sequence, read N- to C-terminus: Protein GrpE (191 aa).

This sequence belongs to the GrpE family. In terms of assembly, homodimer.

It is found in the cytoplasm. Its function is as follows. Participates actively in the response to hyperosmotic and heat shock by preventing the aggregation of stress-denatured proteins, in association with DnaK and GrpE. It is the nucleotide exchange factor for DnaK and may function as a thermosensor. Unfolded proteins bind initially to DnaJ; upon interaction with the DnaJ-bound protein, DnaK hydrolyzes its bound ATP, resulting in the formation of a stable complex. GrpE releases ADP from DnaK; ATP binding to DnaK triggers the release of the substrate protein, thus completing the reaction cycle. Several rounds of ATP-dependent interactions between DnaJ, DnaK and GrpE are required for fully efficient folding. The protein is Protein GrpE of Listeria monocytogenes serotype 1/2a (strain 10403S).